The sequence spans 977 residues: uncharacterized protein (977 aa).

The first 24 residues, 1–24 (MQSNLLKVLGVLAIVATLVCFIFA), serve as a signal peptide directing secretion. The interval 125–146 (TESTRPGKSNLDDKGNMIPIPR) is disordered. 6 consecutive transmembrane segments (helical) span residues 612 to 632 (IKAI…LGFA), 722 to 742 (LGLS…IVII), 754 to 774 (AFMA…FLLF), 796 to 816 (VVMM…LDFV), 833 to 853 (FIGT…INWF), and 866 to 886 (GVNM…YGYV). The interval 918-977 (KALSPIGMDDKTRQGITGRAEARLKQRNKTLDQAEKNRKNTPKEGGEKTNAEPPQPEARG) is disordered. A compositionally biased stretch (basic and acidic residues) spans 937–967 (AEARLKQRNKTLDQAEKNRKNTPKEGGEKTN).

Belongs to the TrbL/VirB6 family.

The protein localises to the cell membrane. This is an uncharacterized protein from Rickettsia felis (strain ATCC VR-1525 / URRWXCal2) (Rickettsia azadi).